We begin with the raw amino-acid sequence, 615 residues long: Fibrinogen alpha chain (615 aa).

Positions 1–19 (MFSVRDLCLVLSLVGAIKT) are cleaved as a signal peptide. Positions 71 to 602 (CRMKGLIDEV…GHTKARPARG (532 aa)) form a coiled coil. Residues 267 to 427 (FGGDGHARGD…TKQEFHTGKL (161 aa)) form a disordered region. Polar residues predominate over residues 293 to 302 (GTSSIGNVNP). O-linked (GalNAc...) threonine glycosylation occurs at threonine 325. A compositionally biased stretch (low complexity) spans 373 to 396 (GSAGTWNTGSSGSSSFRPDSSGHG). A disulfide bridge links cysteine 455 with cysteine 485. The tract at residues 530 to 615 (EFAALGESGS…SPLGEPSLTP (86 aa)) is disordered. Residues 537 to 549 (SGSSSSKTSTHSK) are compositionally biased toward low complexity. A compositionally biased stretch (polar residues) spans 550–560 (QFVSSSTTVNR). The span at 591 to 601 (QKGHTKARPAR) shows a compositional bias: basic residues.

Heterohexamer; disulfide linked. Contains 2 sets of 3 non-identical chains (alpha, beta and gamma). The 2 heterotrimers are in head to head conformation with the N-termini in a small central domain. In terms of processing, conversion of fibrinogen to fibrin is triggered by thrombin, which cleaves fibrinopeptides A and B from alpha and beta chains, and thus exposes the N-terminal polymerization sites responsible for the formation of the soft clot. The soft clot is converted into the hard clot by factor XIIIA which catalyzes the epsilon-(gamma-glutamyl)lysine cross-linking between gamma chains (stronger) and between alpha chains (weaker) of different monomers. Post-translationally, forms F13A-mediated cross-links between a glutamine and the epsilon-amino group of a lysine residue, forming fibronectin-fibrinogen heteropolymers.

The protein resides in the secreted. Cleaved by the protease thrombin to yield monomers which, together with fibrinogen beta (FGB) and fibrinogen gamma (FGG), polymerize to form an insoluble fibrin matrix. Fibrin has a major function in hemostasis as one of the primary components of blood clots. In addition, functions during the early stages of wound repair to stabilize the lesion and guide cell migration during re-epithelialization. Was originally thought to be essential for platelet aggregation, based on in vitro studies using anticoagulated blood. However, subsequent studies have shown that it is not absolutely required for thrombus formation in vivo. Enhances expression of SELP in activated platelets via an ITGB3-dependent pathway. Maternal fibrinogen is essential for successful pregnancy. Fibrin deposition is also associated with infection, where it protects against IFNG-mediated hemorrhage. May also facilitate the immune response via both innate and T-cell mediated pathways. This chain is Fibrinogen alpha chain (FGA), found in Bos taurus (Bovine).